The chain runs to 442 residues: Lipoyl synthase, apicoplast (442 aa).

An N-terminal signal peptide occupies residues 1-25; that stretch reads MHVLTPSLYIYAFFIVCVRLKCGRS. A disordered region spans residues 92 to 154; sequence LLRSESATDE…EKKPDWFHVP (63 aa). Basic and acidic residues predominate over residues 109–127; it reads LKEKLKESPANWGKDKQEE. Residues Cys-177, Cys-182, Cys-188, Cys-203, Cys-207, Cys-210, and Ser-418 each coordinate [4Fe-4S] cluster. The Radical SAM core domain occupies 189–407; the sequence is WNIGTATIML…KEEGMKMGFK (219 aa).

This sequence belongs to the radical SAM superfamily. Lipoyl synthase family. [4Fe-4S] cluster serves as cofactor.

It is found in the plastid. Its subcellular location is the apicoplast. The catalysed reaction is [[Fe-S] cluster scaffold protein carrying a second [4Fe-4S](2+) cluster] + N(6)-octanoyl-L-lysyl-[protein] + 2 oxidized [2Fe-2S]-[ferredoxin] + 2 S-adenosyl-L-methionine + 4 H(+) = [[Fe-S] cluster scaffold protein] + N(6)-[(R)-dihydrolipoyl]-L-lysyl-[protein] + 4 Fe(3+) + 2 hydrogen sulfide + 2 5'-deoxyadenosine + 2 L-methionine + 2 reduced [2Fe-2S]-[ferredoxin]. The protein operates within protein modification; protein lipoylation via endogenous pathway; protein N(6)-(lipoyl)lysine from octanoyl-[acyl-carrier-protein]: step 2/2. Functionally, catalyzes the radical-mediated insertion of two sulfur atoms into the C-6 and C-8 positions of the octanoyl moiety bound to the lipoyl domains of lipoate-dependent enzymes, thereby converting the octanoylated domains into lipoylated derivatives. In Plasmodium vivax (strain Salvador I), this protein is Lipoyl synthase, apicoplast.